The following is a 498-amino-acid chain: Lysine--tRNA ligase (498 aa).

Residues E408 and E415 each coordinate Mg(2+).

This sequence belongs to the class-II aminoacyl-tRNA synthetase family. Homodimer. The cofactor is Mg(2+).

The protein resides in the cytoplasm. It carries out the reaction tRNA(Lys) + L-lysine + ATP = L-lysyl-tRNA(Lys) + AMP + diphosphate. The protein is Lysine--tRNA ligase of Listeria welshimeri serovar 6b (strain ATCC 35897 / DSM 20650 / CCUG 15529 / CIP 8149 / NCTC 11857 / SLCC 5334 / V8).